A 225-amino-acid polypeptide reads, in one-letter code: UPF0758 protein Ssed_0385 (225 aa).

The 123-residue stretch at 102-224 folds into the MPN domain; it reads ILSDPDLTRD…IVSFAERGWI (123 aa). Residues His-173, His-175, and Asp-186 each contribute to the Zn(2+) site. The short motif at 173-186 is the JAMM motif element; the sequence is HNHPSGVAEPSLAD.

The protein belongs to the UPF0758 family.

This Shewanella sediminis (strain HAW-EB3) protein is UPF0758 protein Ssed_0385.